Consider the following 130-residue polypeptide: Glycine cleavage system H protein (130 aa).

Positions 25–106 constitute a Lipoyl-binding domain; it reads TALIGISDFA…PFDSWMIKVK (82 aa). K66 is modified (N6-lipoyllysine).

It belongs to the GcvH family. As to quaternary structure, the glycine cleavage system is composed of four proteins: P, T, L and H. (R)-lipoate is required as a cofactor.

The glycine cleavage system catalyzes the degradation of glycine. The H protein shuttles the methylamine group of glycine from the P protein to the T protein. The chain is Glycine cleavage system H protein from Leptospira borgpetersenii serovar Hardjo-bovis (strain JB197).